We begin with the raw amino-acid sequence, 289 residues long: Protease HtpX (289 aa).

2 helical membrane-spanning segments follow: residues 5-25 (IVLF…VMSL) and 33-53 (MSGL…ISLL). His-140 is a binding site for Zn(2+). The active site involves Glu-141. His-144 serves as a coordination point for Zn(2+). Transmembrane regions (helical) follow at residues 155 to 175 (LLQG…GGFI) and 193 to 213 (GIVL…TMWF). Glu-218 serves as a coordination point for Zn(2+).

This sequence belongs to the peptidase M48B family. Zn(2+) is required as a cofactor.

The protein localises to the cell inner membrane. This Xylella fastidiosa (strain M23) protein is Protease HtpX.